A 548-amino-acid polypeptide reads, in one-letter code: Eukaryotic translation initiation factor 3 subunit D (548 aa).

N6-acetyllysine is present on Lys-53. Phosphoserine is present on Ser-161. Positions 285–299 (DFDLLTVSETANEPP) are RNA gate. Residues 523–548 (PDGTFSSDEDEEEEEEEEEEEEEEET) form a disordered region. Phosphoserine is present on residues Ser-528 and Ser-529. The segment covering 529–548 (SDEDEEEEEEEEEEEEEEET) has biased composition (acidic residues).

It belongs to the eIF-3 subunit D family. Component of the eukaryotic translation initiation factor 3 (eIF-3) complex, which is composed of 13 subunits: EIF3A, EIF3B, EIF3C, EIF3D, EIF3E, EIF3F, EIF3G, EIF3H, EIF3I, EIF3J, EIF3K, EIF3L and EIF3M. The eIF-3 complex appears to include 3 stable modules: module A is composed of EIF3A, EIF3B, EIF3G and EIF3I; module B is composed of EIF3F, EIF3H, and EIF3M; and module C is composed of EIF3C, EIF3D, EIF3E, EIF3K and EIF3L. EIF3C of module C binds EIF3B of module A and EIF3H of module B, thereby linking the three modules. EIF3J is a labile subunit that binds to the eIF-3 complex via EIF3B. The eIF-3 complex interacts with RPS6KB1 under conditions of nutrient depletion. Mitogenic stimulation leads to binding and activation of a complex composed of MTOR and RPTOR, leading to phosphorylation and release of RPS6KB1 and binding of EIF4B to eIF-3.

It is found in the cytoplasm. In terms of biological role, mRNA cap-binding component of the eukaryotic translation initiation factor 3 (eIF-3) complex, a complex required for several steps in the initiation of protein synthesis of a specialized repertoire of mRNAs. The eIF-3 complex associates with the 40S ribosome and facilitates the recruitment of eIF-1, eIF-1A, eIF-2:GTP:methionyl-tRNAi and eIF-5 to form the 43S pre-initiation complex (43S PIC). The eIF-3 complex stimulates mRNA recruitment to the 43S PIC and scanning of the mRNA for AUG recognition. The eIF-3 complex is also required for disassembly and recycling of post-termination ribosomal complexes and subsequently prevents premature joining of the 40S and 60S ribosomal subunits prior to initiation. The eIF-3 complex specifically targets and initiates translation of a subset of mRNAs involved in cell proliferation, including cell cycling, differentiation and apoptosis, and uses different modes of RNA stem-loop binding to exert either translational activation or repression. In the eIF-3 complex, EIF3D specifically recognizes and binds the 7-methylguanosine cap of a subset of mRNAs. The chain is Eukaryotic translation initiation factor 3 subunit D from Macaca fascicularis (Crab-eating macaque).